A 269-amino-acid chain; its full sequence is uncharacterized protein (269 aa).

One can recognise an HTH gntR-type domain in the interval 5–73 (APKWRELADR…RGHGTVVRRK (69 aa)). The H-T-H motif DNA-binding region spans 33 to 52 (IRDLVEAGEGSKETVHRAYK).

Functionally, the imp locus inhibits the extrachromosomal maintenance of the Streptomyces plasmid SLP1. This is an uncharacterized protein from Streptomyces coelicolor (strain ATCC BAA-471 / A3(2) / M145).